A 554-amino-acid chain; its full sequence is Dihydroxy-acid dehydratase (554 aa).

A Mg(2+)-binding site is contributed by Asp78. Position 119 (Cys119) interacts with [2Fe-2S] cluster. 2 residues coordinate Mg(2+): Asp120 and Lys121. Lys121 is modified (N6-carboxylysine). Residue Cys191 participates in [2Fe-2S] cluster binding. Glu442 provides a ligand contact to Mg(2+). Ser468 acts as the Proton acceptor in catalysis.

It belongs to the IlvD/Edd family. As to quaternary structure, homodimer. It depends on [2Fe-2S] cluster as a cofactor. The cofactor is Mg(2+).

It carries out the reaction (2R)-2,3-dihydroxy-3-methylbutanoate = 3-methyl-2-oxobutanoate + H2O. The enzyme catalyses (2R,3R)-2,3-dihydroxy-3-methylpentanoate = (S)-3-methyl-2-oxopentanoate + H2O. It participates in amino-acid biosynthesis; L-isoleucine biosynthesis; L-isoleucine from 2-oxobutanoate: step 3/4. The protein operates within amino-acid biosynthesis; L-valine biosynthesis; L-valine from pyruvate: step 3/4. Its function is as follows. Functions in the biosynthesis of branched-chain amino acids. Catalyzes the dehydration of (2R,3R)-2,3-dihydroxy-3-methylpentanoate (2,3-dihydroxy-3-methylvalerate) into 2-oxo-3-methylpentanoate (2-oxo-3-methylvalerate) and of (2R)-2,3-dihydroxy-3-methylbutanoate (2,3-dihydroxyisovalerate) into 2-oxo-3-methylbutanoate (2-oxoisovalerate), the penultimate precursor to L-isoleucine and L-valine, respectively. In Acetivibrio thermocellus (strain ATCC 27405 / DSM 1237 / JCM 9322 / NBRC 103400 / NCIMB 10682 / NRRL B-4536 / VPI 7372) (Clostridium thermocellum), this protein is Dihydroxy-acid dehydratase.